A 386-amino-acid polypeptide reads, in one-letter code: Succinate--CoA ligase [ADP-forming] subunit beta (386 aa).

An ATP-grasp domain is found at Lys9 to Arg244. ATP-binding positions include Lys46, Gly53 to Gly55, Glu99, Cys102, and Glu107. Positions 199 and 213 each coordinate Mg(2+). Substrate is bound by residues Asn264 and Gly321–Met323.

Belongs to the succinate/malate CoA ligase beta subunit family. Heterotetramer of two alpha and two beta subunits. Mg(2+) serves as cofactor.

The enzyme catalyses succinate + ATP + CoA = succinyl-CoA + ADP + phosphate. It catalyses the reaction GTP + succinate + CoA = succinyl-CoA + GDP + phosphate. The protein operates within carbohydrate metabolism; tricarboxylic acid cycle; succinate from succinyl-CoA (ligase route): step 1/1. Functionally, succinyl-CoA synthetase functions in the citric acid cycle (TCA), coupling the hydrolysis of succinyl-CoA to the synthesis of either ATP or GTP and thus represents the only step of substrate-level phosphorylation in the TCA. The beta subunit provides nucleotide specificity of the enzyme and binds the substrate succinate, while the binding sites for coenzyme A and phosphate are found in the alpha subunit. The polypeptide is Succinate--CoA ligase [ADP-forming] subunit beta (Rickettsia akari (strain Hartford)).